Consider the following 853-residue polypeptide: E3 ubiquitin-protein ligase RNF216 (853 aa).

Disordered stretches follow at residues Thr-33–Val-102, Pro-125–Asp-152, and Pro-165–Leu-228. Acidic residues predominate over residues Gln-53–Tyr-73. Residue Lys-89 forms a Glycyl lysine isopeptide (Lys-Gly) (interchain with G-Cter in SUMO2) linkage. Residues Lys-339 and Lys-342 each participate in a glycyl lysine isopeptide (Lys-Gly) (interchain with G-Cter in SUMO2) cross-link. Ser-407 is subject to Phosphoserine. Residues Lys-413, Lys-418, Lys-436, Lys-447, and Lys-473 each participate in a glycyl lysine isopeptide (Lys-Gly) (interchain with G-Cter in SUMO2) cross-link. A coiled-coil region spans residues Val-463 to Glu-479. The segment at Gln-499–Ser-716 is TRIAD supradomain. The Zn(2+) site is built by Cys-503, Cys-506, Cys-525, Cys-528, Cys-593, and Cys-596. An RING-type 1 zinc finger spans residues Cys-503–Cys-552. The IBR-type zinc finger occupies Tyr-571–Cys-636. Lys-607 is covalently cross-linked (Glycyl lysine isopeptide (Lys-Gly) (interchain with G-Cter in SUMO2)). Residues Cys-611, Cys-616, Cys-621, Cys-624, His-631, and Cys-636 each coordinate Zn(2+). Glycyl lysine isopeptide (Lys-Gly) (interchain with G-Cter in SUMO2) cross-links involve residues Lys-646 and Lys-654. Zn(2+)-binding residues include Cys-663 and Cys-666. Residues Cys-663–Cys-691 form an RING-type 2; atypical zinc finger. Residue Cys-676 is part of the active site. Zn(2+)-binding residues include Cys-681, Cys-683, Cys-688, Cys-691, His-704, and Cys-712. Positions Thr-725–Thr-751 form a coiled coil. Glycyl lysine isopeptide (Lys-Gly) (interchain with G-Cter in SUMO2) cross-links involve residues Lys-753 and Lys-761.

As to quaternary structure, interacts with UBE2L3 and to some extent with UBE2L6. Interacts with TRAF3, TLR3, TLR4, TLR5 and TLR9. Isoform 3/ZIN binds RIPK1. Post-translationally, auto-ubiquitinated. Phosphorylation at Ser-719 enhances acceptor ubiquitin binding and chain-type specificity towards 'Lys-63' di-ubiquitin but not di-ubiquitin with other linkage types.

The protein resides in the cytoplasm. The protein localises to the cytoplasmic vesicle. It localises to the clathrin-coated vesicle. The enzyme catalyses S-ubiquitinyl-[E2 ubiquitin-conjugating enzyme]-L-cysteine + [acceptor protein]-L-lysine = [E2 ubiquitin-conjugating enzyme]-L-cysteine + N(6)-ubiquitinyl-[acceptor protein]-L-lysine.. It functions in the pathway protein modification; protein ubiquitination. Its activity is regulated as follows. Allosterically activated by 'Lys-63'-linked di-ubiquitin. E3 ubiquitin ligase which accepts ubiquitin from specific E2 ubiquitin-conjugating enzymes, and then transfers it to substrates promoting their ubiquitination. Plays a role in the regulation of antiviral responses by promoting the degradation of TRAF3, TLR4 and TLR9. In turn, down-regulates NF-kappa-B and IRF3 activation as well as beta interferon production. Also participates in the regulation of autophagy by ubiquitinating BECN1 leading to its degradation and autophagy inhibition. Plays a role in ARC-dependent synaptic plasticity by mediating ARC ubiquitination resulting in its rapid proteasomal degradation. Plays aso an essential role in spermatogenesis and male fertility. Mechanistically, regulates meiosis by promoting the degradation of PRKACB through the ubiquitin-mediated lysosome pathway. Modulates the gonadotropin-releasing hormone signal pathway by affecting the stability of STAU2 that is required for the microtubule-dependent transport of neuronal RNA from the cell body to the dendrite. The chain is E3 ubiquitin-protein ligase RNF216 (Rnf216) from Mus musculus (Mouse).